A 140-amino-acid chain; its full sequence is Putative pre-16S rRNA nuclease (140 aa).

Belongs to the YqgF nuclease family.

It localises to the cytoplasm. Functionally, could be a nuclease involved in processing of the 5'-end of pre-16S rRNA. The polypeptide is Putative pre-16S rRNA nuclease (Vibrio vulnificus (strain CMCP6)).